The sequence spans 128 residues: Ribosome-binding factor A (128 aa).

The protein belongs to the RbfA family. As to quaternary structure, monomer. Binds 30S ribosomal subunits, but not 50S ribosomal subunits or 70S ribosomes.

The protein localises to the cytoplasm. Its function is as follows. One of several proteins that assist in the late maturation steps of the functional core of the 30S ribosomal subunit. Associates with free 30S ribosomal subunits (but not with 30S subunits that are part of 70S ribosomes or polysomes). Required for efficient processing of 16S rRNA. May interact with the 5'-terminal helix region of 16S rRNA. In Saccharophagus degradans (strain 2-40 / ATCC 43961 / DSM 17024), this protein is Ribosome-binding factor A.